A 344-amino-acid polypeptide reads, in one-letter code: Fructose-1,6-bisphosphatase class 1 (344 aa).

Mg(2+) contacts are provided by E91, D110, L112, and D113. Substrate is bound by residues 113 to 116 (DGSS) and N200. Residue E272 participates in Mg(2+) binding.

Belongs to the FBPase class 1 family. As to quaternary structure, homotetramer. It depends on Mg(2+) as a cofactor.

The protein resides in the cytoplasm. The catalysed reaction is beta-D-fructose 1,6-bisphosphate + H2O = beta-D-fructose 6-phosphate + phosphate. It functions in the pathway carbohydrate biosynthesis; Calvin cycle. This is Fructose-1,6-bisphosphatase class 1 from Rhodopseudomonas palustris (strain BisB18).